We begin with the raw amino-acid sequence, 301 residues long: uncharacterized protein (301 aa).

Transmembrane regions (helical) follow at residues 1 to 21 (MSWI…LRII), 33 to 53 (SVLF…YVYY), 72 to 92 (AMSL…KIPW), 101 to 121 (FGII…IILI), 124 to 144 (FAWL…KTFY), 194 to 214 (VLIE…IFAI), 220 to 240 (IIYT…FCLA), 253 to 273 (LALI…IAIP), and 274 to 294 (EYVA…ASII).

It belongs to the TerC family.

The protein localises to the cell membrane. This is an uncharacterized protein from Rickettsia conorii (strain ATCC VR-613 / Malish 7).